Here is a 577-residue protein sequence, read N- to C-terminus: MFS-type transporter CPUR_05422 (577 aa).

Positions 1–49 are disordered; it reads MSAMSAMGKPEHGSATTSDLEHRATESSLEKQDVEAAPPGPVKPVDPSP. A compositionally biased stretch (basic and acidic residues) spans 19–34; sequence DLEHRATESSLEKQDV. A compositionally biased stretch (pro residues) spans 38 to 47; that stretch reads PPGPVKPVDP. The next 14 helical transmembrane spans lie at 52–72, 93–113, 123–143, 157–177, 184–204, 212–232, 249–269, 285–305, 326–346, 359–379, 383–403, 416–436, 449–469, and 525–545; these read STLK…LVAV, DVGW…LLFG, VVLL…GAAP, VGSA…IPLA, GLMG…GGAF, WCFY…FFYF, ILSL…CLLL, IIVL…VQIC, FLTT…IPIW, GIQL…GGLL, IGYY…GAGL, VIGY…TPNL, MGIA…VAVG, and VFIV…CMEW. The interval 554-577 is disordered; the sequence is PPAGPPAGAPTESAPVETKAAGHT.

It belongs to the major facilitator superfamily. TCR/Tet family.

The protein resides in the membrane. In terms of biological role, MFS-type transporter; part of the ergochrome gene cluster responsible for the typical purple-black color of the ergot sclerotia. The ergochrome gene cluster produces several ergot pigments including the yellow ergochrome secalonic acid and its derivatives, as well as the red anthraquinones endocrocin and clavorubin. This Claviceps purpurea (strain 20.1) (Ergot fungus) protein is MFS-type transporter CPUR_05422.